The sequence spans 253 residues: Imidazole glycerol phosphate synthase subunit HisF (253 aa).

Residues D11 and D130 contribute to the active site.

The protein belongs to the HisA/HisF family. In terms of assembly, heterodimer of HisH and HisF.

The protein resides in the cytoplasm. The enzyme catalyses 5-[(5-phospho-1-deoxy-D-ribulos-1-ylimino)methylamino]-1-(5-phospho-beta-D-ribosyl)imidazole-4-carboxamide + L-glutamine = D-erythro-1-(imidazol-4-yl)glycerol 3-phosphate + 5-amino-1-(5-phospho-beta-D-ribosyl)imidazole-4-carboxamide + L-glutamate + H(+). The protein operates within amino-acid biosynthesis; L-histidine biosynthesis; L-histidine from 5-phospho-alpha-D-ribose 1-diphosphate: step 5/9. In terms of biological role, IGPS catalyzes the conversion of PRFAR and glutamine to IGP, AICAR and glutamate. The HisF subunit catalyzes the cyclization activity that produces IGP and AICAR from PRFAR using the ammonia provided by the HisH subunit. This chain is Imidazole glycerol phosphate synthase subunit HisF, found in Paracoccus denitrificans (strain Pd 1222).